The following is a 263-amino-acid chain: Acyl-[acyl-carrier-protein]--UDP-N-acetylglucosamine O-acyltransferase (263 aa).

This sequence belongs to the transferase hexapeptide repeat family. LpxA subfamily. Homotrimer.

The protein resides in the cytoplasm. The enzyme catalyses a (3R)-hydroxyacyl-[ACP] + UDP-N-acetyl-alpha-D-glucosamine = a UDP-3-O-[(3R)-3-hydroxyacyl]-N-acetyl-alpha-D-glucosamine + holo-[ACP]. It functions in the pathway glycolipid biosynthesis; lipid IV(A) biosynthesis; lipid IV(A) from (3R)-3-hydroxytetradecanoyl-[acyl-carrier-protein] and UDP-N-acetyl-alpha-D-glucosamine: step 1/6. Involved in the biosynthesis of lipid A, a phosphorylated glycolipid that anchors the lipopolysaccharide to the outer membrane of the cell. In Caulobacter vibrioides (strain ATCC 19089 / CIP 103742 / CB 15) (Caulobacter crescentus), this protein is Acyl-[acyl-carrier-protein]--UDP-N-acetylglucosamine O-acyltransferase.